The following is a 520-amino-acid chain: MAYFNQHQSMISKRYLTFFSKSKKKKPFSAGQLIGLILGPLLFLLTLLFFHPQDLPWKGVYVLAITLWIATWWITEAIPIAATSLLPIVLLPLGHILTPEQVSSEYGNDIIFLFLGGFILAIAMERWNLHTRVALTIINLIGASTSKILLGFMVATGFLSMFVSNTAAVMIMIPIGLAIIKEAHDLQEANTNQTSIQKFEKSLVLAIGYAGTIGGLGTLIGTPPLIILKGQYMQHFGHEISFAKWMIVGIPTVIVLLGITWLYLRYVAFRHDLKYLPGGQTLIKQKLDELGKMKYEEKVVQTIFVLASLLWITREFLLKKWEVTSSVADGTIAIFISILLFVIPAKNTEKHRRIIDWEVAKELPWGVLILFGGGLALAKGISESGLAKWLGEQLKSLNGVSPILIVIVITIFVLFLTEVTSNTATATMILPILATLSVAVGVHPLLLMAPAAMAANCAYMLPVGTPPNAIIFGSGKISIKQMASVGFWVNLISAIIIILVVYYVMPIVLGIDINQPLPLK.

Helical transmembrane passes span 30-50 (AGQL…LLFF), 55-75 (LPWK…WWIT), 77-97 (AIPI…GHIL), 104-124 (SEYG…AIAM), 160-180 (SMFV…LAII), 207-227 (IGYA…PLII), 242-262 (FAKW…ITWL), 298-318 (KVVQ…EFLL), 323-343 (VTSS…LFVI), 362-382 (ELPW…KGIS), 399-419 (GVSP…LTEV), 428-448 (MILP…LLLM), 452-472 (AMAA…AIIF), and 491-511 (LISA…VLGI).

Belongs to the SLC13A/DASS transporter (TC 2.A.47) family. NADC subfamily.

The protein resides in the cell membrane. Its function is as follows. Mediates the transport of the dicarboxylates fumarate, malate, and succinate across the cytoplasmic membrane via a Na(+)-electrochemical gradient. This is Sodium-dependent dicarboxylate transporter SdcS (sdcS) from Staphylococcus aureus (strain MSSA476).